Reading from the N-terminus, the 162-residue chain is MNTRALVRLCLVSTIIIALDQATKALVATTLVLHESIPVIHGFFNLTHIMNPGGAFGLFAGHSPEVRKFFFLFVSSLVALMILWLYQRTAQTHRVLSFGLAAIFAGAVGNLIDRFRFGMVVDFLDFYLGAYHWPAFNVADSAITIGMVVFVYHVIFNKVPDL.

Transmembrane regions (helical) follow at residues 9–29 (LCLV…LVAT), 39–59 (VIHG…FGLF), 66–86 (VRKF…LWLY), and 95–115 (VLSF…IDRF). Catalysis depends on residues Asp122 and Asp140. The chain crosses the membrane as a helical span at residues 136-156 (FNVADSAITIGMVVFVYHVIF).

Belongs to the peptidase A8 family.

Its subcellular location is the cell inner membrane. It catalyses the reaction Release of signal peptides from bacterial membrane prolipoproteins. Hydrolyzes -Xaa-Yaa-Zaa-|-(S,diacylglyceryl)Cys-, in which Xaa is hydrophobic (preferably Leu), and Yaa (Ala or Ser) and Zaa (Gly or Ala) have small, neutral side chains.. The protein operates within protein modification; lipoprotein biosynthesis (signal peptide cleavage). Its function is as follows. This protein specifically catalyzes the removal of signal peptides from prolipoproteins. The sequence is that of Lipoprotein signal peptidase from Desulforapulum autotrophicum (strain ATCC 43914 / DSM 3382 / VKM B-1955 / HRM2) (Desulfobacterium autotrophicum).